Reading from the N-terminus, the 417-residue chain is Serine hydroxymethyltransferase (417 aa).

(6S)-5,6,7,8-tetrahydrofolate-binding positions include leucine 122 and 126-128 (GHL). The residue at position 230 (lysine 230) is an N6-(pyridoxal phosphate)lysine. 355-357 (SPF) contacts (6S)-5,6,7,8-tetrahydrofolate.

It belongs to the SHMT family. Homodimer. Pyridoxal 5'-phosphate serves as cofactor.

It is found in the cytoplasm. It carries out the reaction (6R)-5,10-methylene-5,6,7,8-tetrahydrofolate + glycine + H2O = (6S)-5,6,7,8-tetrahydrofolate + L-serine. It functions in the pathway one-carbon metabolism; tetrahydrofolate interconversion. It participates in amino-acid biosynthesis; glycine biosynthesis; glycine from L-serine: step 1/1. In terms of biological role, catalyzes the reversible interconversion of serine and glycine with tetrahydrofolate (THF) serving as the one-carbon carrier. This reaction serves as the major source of one-carbon groups required for the biosynthesis of purines, thymidylate, methionine, and other important biomolecules. Also exhibits THF-independent aldolase activity toward beta-hydroxyamino acids, producing glycine and aldehydes, via a retro-aldol mechanism. This Francisella tularensis subsp. tularensis (strain FSC 198) protein is Serine hydroxymethyltransferase.